The primary structure comprises 251 residues: MQTLEEHCWSCSCTRGRDKKGTKVSAWLARRVGKAMSSLNSLLSLAYSTLASSEGRSLIQRSLVLFTVGVFLALVLNLLQIQRNVTLFPEEVIATIFSSAWWVPPCCGTAAAVVGLLYPCIDSRIGEPHKFKREWASVMRCIAVFVGINHASAKLDFANNVQLSLTLAALSLGLWWTFDRSRSGLGLGITIAFLATLITQFLVYNGVYQYTSPDFLYIRSWLPCIFFSGGVTVGNIGRQLAMGSSEKTHGD.

Residues 1-58 (MQTLEEHCWSCSCTRGRDKKGTKVSAWLARRVGKAMSSLNSLLSLAYSTLASSEGRSL) are Cytoplasmic-facing. The helical transmembrane segment at 59-81 (IQRSLVLFTVGVFLALVLNLLQI) threads the bilayer. Topologically, residues 82–100 (QRNVTLFPEEVIATIFSSA) are extracellular. A helical membrane pass occupies residues 101-118 (WWVPPCCGTAAAVVGLLY). Residues 119–133 (PCIDSRIGEPHKFKR) are Cytoplasmic-facing. Residues 134 to 156 (EWASVMRCIAVFVGINHASAKLD) traverse the membrane as a helical segment. Residues 157–159 (FAN) are Extracellular-facing. Residues 160 to 178 (NVQLSLTLAALSLGLWWTF) form a helical membrane-spanning segment. The Cytoplasmic segment spans residues 179 to 183 (DRSRS). A helical membrane pass occupies residues 184–205 (GLGLGITIAFLATLITQFLVYN). Over 206 to 219 (GVYQYTSPDFLYIR) the chain is Extracellular. A helical transmembrane segment spans residues 220–237 (SWLPCIFFSGGVTVGNIG). Over 238 to 251 (RQLAMGSSEKTHGD) the chain is Cytoplasmic. A KxHxx motif is present at residues 245-251 (SEKTHGD).

It belongs to the INSIG family. In terms of assembly, interacts with scap; interaction is direct and only takes place in the presence of sterols; it prevents interaction between scap and the coat protein complex II (COPII). Associates with the SCAP-SREBP complex; association is mediated via its interaction with scap and only takes place in the presence of sterols.

The protein resides in the endoplasmic reticulum membrane. Its function is as follows. Oxysterol-binding protein that mediates feedback control of cholesterol synthesis by controlling both endoplasmic reticulum to Golgi transport of scap and degradation of hmgcr. Acts as a negative regulator of cholesterol biosynthesis by mediating the retention of the SCAP-SREBP complex in the endoplasmic reticulum, thereby blocking the processing of sterol regulatory element-binding proteins (SREBPs). Binds oxysterol, including 25-hydroxycholesterol, regulating interaction with scap and retention of the SCAP-SREBP complex in the endoplasmic reticulum. In presence of oxysterol, interacts with scap, retaining the SCAP-SREBP complex in the endoplasmic reticulum, thereby preventing scap from escorting SREBPs to the Golgi. Sterol deprivation reduces oxysterol-binding, disrupting the interaction between insig1 and scap, thereby promoting Golgi transport of the SCAP-SREBP complex, followed by processing and nuclear translocation of SREBPs. Also regulates cholesterol synthesis by regulating degradation of hmgcr. The protein is Insulin-induced gene 1 protein of Xenopus laevis (African clawed frog).